Consider the following 95-residue polypeptide: Co-chaperonin GroES (95 aa).

It belongs to the GroES chaperonin family. In terms of assembly, heptamer of 7 subunits arranged in a ring. Interacts with the chaperonin GroEL.

The protein localises to the cytoplasm. Its function is as follows. Together with the chaperonin GroEL, plays an essential role in assisting protein folding. The GroEL-GroES system forms a nano-cage that allows encapsulation of the non-native substrate proteins and provides a physical environment optimized to promote and accelerate protein folding. GroES binds to the apical surface of the GroEL ring, thereby capping the opening of the GroEL channel. The protein is Co-chaperonin GroES of Nitratidesulfovibrio vulgaris (strain ATCC 29579 / DSM 644 / CCUG 34227 / NCIMB 8303 / VKM B-1760 / Hildenborough) (Desulfovibrio vulgaris).